Consider the following 89-residue polypeptide: Small ribosomal subunit protein uS15 (89 aa).

The interval 1–24 is disordered; sequence MSLNAETKAGIVEKYRRDPSDTGS. Residues 11-20 are compositionally biased toward basic and acidic residues; it reads IVEKYRRDPS.

It belongs to the universal ribosomal protein uS15 family. Part of the 30S ribosomal subunit. Forms a bridge to the 50S subunit in the 70S ribosome, contacting the 23S rRNA.

In terms of biological role, one of the primary rRNA binding proteins, it binds directly to 16S rRNA where it helps nucleate assembly of the platform of the 30S subunit by binding and bridging several RNA helices of the 16S rRNA. Forms an intersubunit bridge (bridge B4) with the 23S rRNA of the 50S subunit in the ribosome. This chain is Small ribosomal subunit protein uS15, found in Thioalkalivibrio sulfidiphilus (strain HL-EbGR7).